A 45-amino-acid polypeptide reads, in one-letter code: Large ribosomal subunit protein bL34 (45 aa).

The tract at residues 26–45 is disordered; that stretch reads RAGRSILSARRSKGRSQLSA.

This sequence belongs to the bacterial ribosomal protein bL34 family.

This Parafrankia sp. (strain EAN1pec) protein is Large ribosomal subunit protein bL34.